A 704-amino-acid polypeptide reads, in one-letter code: MTRQVALDKVRNIGIMAHIDAGKTTTTERILYYTGRLHRMGEVHDGGATMDWMEQEKERGITITSAATTCFWSPKYGNYKGENHRINIIDTPGHVDFTVEVERSLRVLDGAVALFCAVGGVEPQSETVWRQANKYGVPRIAYINKMDRTGADFFDTIKAIRERLNSNPVPLQIPIGEGEIYAGFVDLIRMKGIIFDKEDGSTYEEVEIPHDLENEARTWRINMLEAVSEVDETLLEKYLNGEDITESEVRKVLRQATLNVDIIPVLCGSSFKNKGVQFMLDAVVDYLASPLDDGEVEGHHPRTEEDVVRHPSDDEPFAALAFKIATDPFVGKLTFFRVYSGMLKAGSYVLNSITGKKERVGRVLQMHSNKREDLDAVYAGDIAAAVGLKEVRTGDTLCDEASPVVLEKMVFPEPVIQIAIEPKTKVDSDKLGVSLAKLAEEDPTFRVKTDDETGQTLIAGMGELHLEILVDRLRREFKVEANVGQPQVAYRETIRSKVDFEGKFVRQSGGKGQFGLVNITVEPLEEGKGYEFVDAVKGGVIPREYIPAVNAGIQEAMKDGVVAGYPMQDIKVTLFDGKYHDVDSSEMAFKIAGSIGFKGGARKANPVLLEPIMKVEVVTPEEYLGDVMGDLSGRRGHIEGMGQRAGAQFVGAKVPLSAMFGYSTDLRSMTQGRANYSMEFESYREVPKNIAETLQEKRSSKDAQ.

Positions 8–291 constitute a tr-type G domain; the sequence is DKVRNIGIMA…AVVDYLASPL (284 aa). GTP is bound by residues 17-24, 90-94, and 144-147; these read AHIDAGKT, DTPGH, and NKMD.

This sequence belongs to the TRAFAC class translation factor GTPase superfamily. Classic translation factor GTPase family. EF-G/EF-2 subfamily.

The protein resides in the cytoplasm. Catalyzes the GTP-dependent ribosomal translocation step during translation elongation. During this step, the ribosome changes from the pre-translocational (PRE) to the post-translocational (POST) state as the newly formed A-site-bound peptidyl-tRNA and P-site-bound deacylated tRNA move to the P and E sites, respectively. Catalyzes the coordinated movement of the two tRNA molecules, the mRNA and conformational changes in the ribosome. This Chlorobium phaeovibrioides (strain DSM 265 / 1930) (Prosthecochloris vibrioformis (strain DSM 265)) protein is Elongation factor G.